A 215-amino-acid chain; its full sequence is Heart- and neural crest derivatives-expressed protein 1 (215 aa).

Disordered stretches follow at residues 53–109 (APDF…RTES) and 169–202 (VDGGRESKRKRELQQHEGFPPALGPGEKRIKGRT). Low complexity predominate over residues 65–75 (AAAAAATYGPD). A compositionally biased stretch (basic residues) spans 92 to 104 (LGRRKGSGPKKER). Positions 94-146 (RRKGSGPKKERRRTESINSAFAELRECIPNVPADTKLSKIKTLRLATSYIAYL) constitute a bHLH domain. Thr-107 bears the Phosphothreonine; by PLK4 mark. Position 109 is a phosphoserine; by PLK4 (Ser-109).

Efficient DNA binding requires dimerization with another bHLH protein. Forms homodimers and heterodimers with TCF3 gene products E12 and E47, HAND2 and HEY1, HEY2 and HEYL (hairy-related transcription factors). Interacts with MDFIC. Interacts with SOX15; the interaction enhances HAND1-induced differentiation of trophoblast giant cells. Post-translationally, phosphorylation by PLK4 disrupts the interaction with MDFIC and leads to translocation into the nucleoplasm, allowing dimerization and transcription factor activity.

It is found in the nucleus. It localises to the nucleoplasm. The protein localises to the nucleolus. Its function is as follows. Transcription factor that plays an essential role in both trophoblast giant cell differentiation and in cardiac morphogenesis. Binds the DNA sequence 5'-NRTCTG-3' (non-canonical E-box). Acts as a transcriptional repressor of SOX15. In the adult, could be required for ongoing expression of cardiac-specific genes. The polypeptide is Heart- and neural crest derivatives-expressed protein 1 (HAND1) (Oryctolagus cuniculus (Rabbit)).